The primary structure comprises 277 residues: MENTENSVDSKSIKNLEPKIIHGSESMDSGISLDNSYKMDYPEMGLCIIINNKNFHKSTGMTSRSGTDVDAANLRETFRNLKYEVRNKNDLTREEIVELMRDVSKEDHSKRSSFVCVLLSHGEEGIIFGTNGPVDLKKITNFFRGDRCRSLTGKPKLFIIQACRGTELDCGIETDSGVDDDMACHKIPVEADFLYAYSTAPGYYSWRNSKDGSWFIQSLCAMLKQYADKLEFMHILTRVNRKVATEFESFSFDATFHAKKQIPCIVSMLTKELYFYH.

N-acetylmethionine is present on Met-1. 2 propeptides span residues 1–9 and 10–28; these read MENTENSVD and SKSIKNLEPKIIHGSESMD. An N6-acetyllysine modification is found at Lys-11. The residue at position 26 (Ser-26) is a Phosphoserine. Active-site residues include His-121 and Cys-163. Cys-163 carries the post-translational modification S-nitrosocysteine; in inhibited form. Arg-207 carries the post-translational modification (Microbial infection) ADP-riboxanated arginine.

Belongs to the peptidase C14A family. As to quaternary structure, heterotetramer that consists of two anti-parallel arranged heterodimers, each one formed by a 17 kDa (p17) and a 12 kDa (p12) subunit. Interacts with BIRC6/bruce. In terms of processing, cleavage by granzyme B, caspase-6, caspase-8 and caspase-10 generates the two active subunits. Additional processing of the propeptides is likely due to the autocatalytic activity of the activated protease. Active heterodimers between the small subunit of caspase-7 protease and the large subunit of caspase-3 also occur and vice versa. Post-translationally, S-nitrosylated on its catalytic site cysteine in unstimulated human cell lines and denitrosylated upon activation of the Fas apoptotic pathway, associated with an increase in intracellular caspase activity. Fas therefore activates caspase-3 not only by inducing the cleavage of the caspase zymogen to its active subunits, but also by stimulating the denitrosylation of its active site thiol. Ubiquitinated by BIRC6; this activity is inhibited by DIABLO/SMAC. In terms of processing, (Microbial infection) ADP-riboxanation by C.violaceum CopC blocks CASP3 processing, preventing CASP3 activation and ability to recognize and cleave substrates. Highly expressed in lung, spleen, heart, liver and kidney. Moderate levels in brain and skeletal muscle, and low in testis. Also found in many cell lines, highest expression in cells of the immune system.

Its subcellular location is the cytoplasm. The enzyme catalyses Strict requirement for an Asp residue at positions P1 and P4. It has a preferred cleavage sequence of Asp-Xaa-Xaa-Asp-|- with a hydrophobic amino-acid residue at P2 and a hydrophilic amino-acid residue at P3, although Val or Ala are also accepted at this position.. Its activity is regulated as follows. Inhibited by isatin sulfonamides. Inhibited by BIRC6; following inhibition of BIRC6-caspase binding by DIABLO/SMAC, BIRC6 is subjected to caspase cleavage, leading to an increase in active caspases. In terms of biological role, thiol protease that acts as a major effector caspase involved in the execution phase of apoptosis. Following cleavage and activation by initiator caspases (CASP8, CASP9 and/or CASP10), mediates execution of apoptosis by catalyzing cleavage of many proteins. At the onset of apoptosis, it proteolytically cleaves poly(ADP-ribose) polymerase PARP1 at a '216-Asp-|-Gly-217' bond. Cleaves and activates sterol regulatory element binding proteins (SREBPs) between the basic helix-loop-helix leucine zipper domain and the membrane attachment domain. Cleaves and activates caspase-6, -7 and -9 (CASP6, CASP7 and CASP9, respectively). Cleaves and inactivates interleukin-18 (IL18). Involved in the cleavage of huntingtin. Triggers cell adhesion in sympathetic neurons through RET cleavage. Cleaves and inhibits serine/threonine-protein kinase AKT1 in response to oxidative stress. Acts as an inhibitor of type I interferon production during virus-induced apoptosis by mediating cleavage of antiviral proteins CGAS, IRF3 and MAVS, thereby preventing cytokine overproduction. Also involved in pyroptosis by mediating cleavage and activation of gasdermin-E (GSDME). Cleaves XRCC4 and phospholipid scramblase proteins XKR4, XKR8 and XKR9, leading to promote phosphatidylserine exposure on apoptotic cell surface. Cleaves BIRC6 following inhibition of BIRC6-caspase binding by DIABLO/SMAC. The protein is Caspase-3 (CASP3) of Homo sapiens (Human).